We begin with the raw amino-acid sequence, 142 residues long: MTTFTAKNETVQRDWYLVDAEGKTLGRLATELARRLLGKTKPVYTTHVDTGDYLVVINAEKVVVTGKKLTDKYYHRFTGYVGNLKSESLGQALQRHPERVLEIAVKGMLPKGPLGRAMYRKLKVYTGSKHPHAAQQPQVLDI.

Belongs to the universal ribosomal protein uL13 family. As to quaternary structure, part of the 50S ribosomal subunit.

Functionally, this protein is one of the early assembly proteins of the 50S ribosomal subunit, although it is not seen to bind rRNA by itself. It is important during the early stages of 50S assembly. The polypeptide is Large ribosomal subunit protein uL13 (Xylella fastidiosa (strain 9a5c)).